Consider the following 202-residue polypeptide: MHNASDIQSALVPMVIEQTAKGERSFDIYSRLLKERIIFLVGQVEEHMANLIVAQLLFLESESPDKDIFLYINSPGGSVTAGMAIYDTMQFIKPNVSTVCIGQAASMGAFLLAGGEKGKRFCLPNSRVMIHQPLGGFQGQASDIAIHAQEILGIKHKLNLMLSEHTGQPLEVIERDTDRDNFMSATQAVEYGLVDAVMTKRG.

The active-site Nucleophile is the serine 106. Histidine 131 is a catalytic residue.

The protein belongs to the peptidase S14 family. In terms of assembly, fourteen ClpP subunits assemble into 2 heptameric rings which stack back to back to give a disk-like structure with a central cavity, resembling the structure of eukaryotic proteasomes.

It localises to the cytoplasm. The enzyme catalyses Hydrolysis of proteins to small peptides in the presence of ATP and magnesium. alpha-casein is the usual test substrate. In the absence of ATP, only oligopeptides shorter than five residues are hydrolyzed (such as succinyl-Leu-Tyr-|-NHMec, and Leu-Tyr-Leu-|-Tyr-Trp, in which cleavage of the -Tyr-|-Leu- and -Tyr-|-Trp bonds also occurs).. Its function is as follows. Cleaves peptides in various proteins in a process that requires ATP hydrolysis. Has a chymotrypsin-like activity. Plays a major role in the degradation of misfolded proteins. This Shewanella sp. (strain ANA-3) protein is ATP-dependent Clp protease proteolytic subunit.